The following is a 3013-amino-acid chain: DmX-like protein 1 (3013 aa).

WD repeat units lie at residues Phe-108–Glu-145, Lys-164–Val-204, and Ala-227–Phe-275. Phosphoserine is present on residues Ser-322, Ser-420, Ser-423, and Ser-434. A disordered region spans residues Pro-418 to Val-442. Residues Asp-474–Pro-514 form a WD 4 repeat. The residue at position 572 (Ser-572) is a Phosphoserine. WD repeat units follow at residues Ala-578–Phe-619 and Lys-842–Ser-893. Phosphoserine is present on residues Ser-916 and Ser-922. 3 WD repeats span residues His-970–Ala-1008, Glu-1145–Lys-1193, and Gly-1208–Ile-1248. Residues Ser-1829, Ser-1896, Ser-1903, and Ser-1965 each carry the phosphoserine modification. 2 disordered regions span residues Gly-2364–Val-2406 and Gln-2431–Leu-2462. Low complexity predominate over residues Ser-2385–Ser-2398. A compositionally biased stretch (acidic residues) spans Asp-2437–Ala-2455. 6 WD repeats span residues Lys-2728–Arg-2769, Gly-2771–Thr-2810, Cys-2822–Leu-2864, Cys-2870–Leu-2909, Ser-2912–Thr-2951, and Asn-2964–Asn-3002.

The polypeptide is DmX-like protein 1 (Dmxl1) (Mus musculus (Mouse)).